The following is a 98-amino-acid chain: uncharacterized protein (98 aa).

The segment at 77 to 98 (SERAGEEVPPLAVAGSDDGHDH) is disordered.

This sequence to M.tuberculosis Rv1991c and Rv3269.

This is an uncharacterized protein from Mycobacterium bovis (strain ATCC BAA-935 / AF2122/97).